The primary structure comprises 97 residues: Co-chaperonin GroES (97 aa).

This sequence belongs to the GroES chaperonin family. As to quaternary structure, heptamer of 7 subunits arranged in a ring. Interacts with the chaperonin GroEL.

Its subcellular location is the cytoplasm. Together with the chaperonin GroEL, plays an essential role in assisting protein folding. The GroEL-GroES system forms a nano-cage that allows encapsulation of the non-native substrate proteins and provides a physical environment optimized to promote and accelerate protein folding. GroES binds to the apical surface of the GroEL ring, thereby capping the opening of the GroEL channel. This Klebsiella aerogenes (Enterobacter aerogenes) protein is Co-chaperonin GroES.